The primary structure comprises 2885 residues: MTDPMMDFFDDANLFGETLEGLSDDTFVQPGPVSLVDELNLGAEFEPLHIDSLNHVQGTPTHQKMADFEQLSQFDSMKFHPVNQSFGSPVEHVLSPHSQFNCSPIHPPNQPNGLFQDVADGSPMWGHQTATGLANQNGSPFHQPGHSHSLHQNKSFVAHPDFALFQASEHQTQCSSLHSQQSRSNLNPGQNSLGQAKNFLDANVSGAHRVNVNHLATAPSSQQTLPVQFSPTANPPAHFLKCSSHQEGNYNRPSPSMTSCSVSNSQQFPSHYSFSSGHVSPSSLLQSSAGLAPGHTNQALSDFAGSNSFSPHRGMKQEPTQHLLNPTPSLNSNNFQILHSSHPQGNYSNSKLSPVHMNFPDPVDAGPPVGHFNDHAETNGFSSLEENLLHHVDSHAEPFAGLDPEDLLQEGLLPQFDESPFGQDNSNHVLDHDLDRQFTSHLVSRPSDMAQTQLQYQARGWPSPLSTNHQHLHSRNHLCLQRQPPSSKKSDGSGTYTKLQNTQVRVMSEKKPRKRVESESKQEKANRIISEAIARAKERGERNIPRVMSPENFPSASVEGKEEKRGRRMKSKPKDRDNKKPKTYSKLKEKTKIGKLIITLGKKHKRRNESSDELSDAEQRSQHTFKEQHSQKRRSNRQIKRKKYAEDAEGKQSEEEVKGSLRVKRNSAPPPGEQPLQLFVENPSEEDAAIVDKILACRTVKKEVSPGVMLDIEEFFVKYKNYSYLHCEWATEQQLLKDKRIQQKIKRFKLRQAQRAHFLADMEEEPFNPDYVEVDRILEVSFCEDKDTGESVIYYLVKWCSLPYEDSTWELKEDVDLAKIEEFEQLQASRPDTRHLDRPPSNIWKKIEQSREYKNGNQLREYQLEGLNWLLFNWYNRRNCILADEMGLGKTIQSITFLYEILLTGIRGPFLIIAPLSTIANWEREFRTWTDINVVVYHGSLISRQMIQQYEMYFRDSQGRIIRGAYRFQAIITTFEMILGGCGELNAIDWRCVIIDEAHRLKNKNCKLLEGLKLMNLEHKVLLTGTPLQNTVEELFSLLHFLEPLRFPSESTFMQEFGDLKTEEQVQKLQAILKPMMLRRLKEDVEKKLAPKEETIIEVELTNIQKKYYRAILEKNFSFLSKGAGQTNVPNLVNTMMELRKCCNHPYLIKGAEEKILGEFRDTYNPSASDFHLQAMIQSAGKLVLIDKLLPKMKAGGHKVLIFSQMVRCLDILEDYLIHKRYLYERIDGRVRGNLRQAAIDRFSKPDSDRFVFLLCTRAGGLGINLTAADTCIIFDSDWNPQNDLQAQARCHRIGQNKAVKVYRLVTRNSYEREMFDRASLKLGLDKAVLQSMSGRDSNVSGIQQLSKKEIEDLLRRGAYGAIMEEEDEGSKFCEEDIDQILLRRTKTITIESEGRGSTFAKASFVASGNRTDISLDDPNFWQKWAKKAELDIDTISGRNSLVIDTPRIRKQTRPFSATKDELAELSEAESEGEEKPKLRRPCDRSGGYGRTECFRVEKNLLVYGWGRWREILSHGRFKRQLNEHDVEVICRALLAYCLIHYRGDEKIKGFIWDLITPTEDGQTRELQNHLGLSAPVPRGRKGKKVKTQTSSFDIQKAEWLRKYNPEQLLQDEGYKKHVKHHCNKVLLRVRMLYYLKQEVIGNESQKVFDGVDASDIDVWVPEPDHSEVPAAWWDFDADKSLLIGVFKHGYEKYNTIRADPALCFLERVGKPDDKAVAAEQRANDYMDGDVEDPEYKPAPAIFKDDIEDDVSSPGDLVIADGEGQLMEGDKVYWPTPSALTTRLRRLITAYQRTNKNRHIQQMQPTFSLPANAMQPLYEEATLNPKMAAKIERQQRWTRREEADFYRVVSTFGVVFDPDRGQFDWTKFRALARLHKKTDNSLEKYLCAFMSMCRRVCRLPSKEELVDPNIFIQPITEERASRTLYRIELLRKVREQALRHPQLFERLKLCHPNPDLPIWWECGSHDRDLLIGAAKHGVSRTDYHILRDPELSFMAAQRNYNQSKAAHSRTSAPLLQQYQVALSASPLTSLPRLLGAKGTLLEDMKVKSESLTEEPQSSEEESMSSMETRTRVKSEPVSPKNGVLSQATGDQKSGGKSETDRRMVAARTEPLTPNPASKKPRVHKRGSQSSSDSDSDSARSSCSSRSSSSSSSSSSCSHSRSGSSSSSSSSCSSASSSSSSSSSSSSSSSSSSSEESDSEEDVQKREGTPHRKAYDEESVASLSTTQDETQDSFQANNGTPESAYLLQGGYMLAASYWPKDRVMINRLDSICQTVLKGKWPSARRHYDANTVASFYTTKLLDSPGAATERGEPSVPTPPAVAVREEHEQSAQMSKVKKHVREKEFTVKIKDEGGLKLTFQKQGLAQKRPFDGEDGALGQQQYLTRLRELQSTSETSLVNLPKAVPASGTSIQPTLGANGAILDSQPIVKKRRGRRRNVEGADILFLNRNKPPNHIPTGMNPALSYPQPQRIPDTESPVPVINLKDGTRLAGDDAPKRKDLDRWLKEHPGYVEDLGAFIPRVQLHEGRPKQKRHRCRNPNKLDINSLTGEERVQLINRRNARKVGGAFAPPLKDLCRFLKENSEYGVAPEWGDVVKQSGFLPESMFERILTGPVVREEVSRRGRRPKSGIAKATTAAAVPAGSVPGNPLLANGLLPGVDLTALQALQQNLQNLQSLQVTAGLMGMPAGLSSGGETKNMAAMFPMLFSGMAGLPNLLGMGGLLSKTAESGAEEKRGNDSKELEGKKERTESQSPENGGERCVPGSPSTSSTAALSSAAAAKPIALNPLLLSNILYPGMLLTPGLNLHLPTLSQSNAFDVQKNKSDDLDSSKSVEIKEENSRVRDQEEKGGTEPSPLNENSTDEGSERASSGSDSSSSSSEDSDSSNED.

Residues 173 to 195 (QCSSLHSQQSRSNLNPGQNSLGQ) form a disordered region. Residue K197 forms a Glycyl lysine isopeptide (Lys-Gly) (interchain with G-Cter in SUMO2) linkage. Disordered stretches follow at residues 242–263 (CSSH…CSVS), 283–347 (SLLQ…QGNY), and 479–677 (CLQR…QPLQ). 2 stretches are compositionally biased toward polar residues: residues 243–263 (SSHQ…CSVS) and 283–310 (SLLQ…NSFS). The segment covering 323-334 (LLNPTPSLNSNN) has biased composition (low complexity). 2 stretches are compositionally biased toward polar residues: residues 335-347 (FQIL…QGNY) and 483-505 (QPPS…TQVR). Position 498 is an N6-acetyllysine (K498). Basic and acidic residues-rich tracts occupy residues 507-526 (MSEK…EKAN) and 534-544 (ARAKERGERNI). Position 549 is a phosphoserine (S549). The span at 572 to 592 (KPKDRDNKKPKTYSKLKEKTK) shows a compositional bias: basic and acidic residues. A Glycyl lysine isopeptide (Lys-Gly) (interchain with G-Cter in SUMO2) cross-link involves residue K595. S610 carries the phosphoserine modification. Positions 617 to 630 (AEQRSQHTFKEQHS) are enriched in basic and acidic residues. Basic residues predominate over residues 631-643 (QKRRSNRQIKRKK). The segment covering 644–659 (YAEDAEGKQSEEEVKG) has biased composition (basic and acidic residues). 2 consecutive Chromo domains span residues 689–760 (AIVD…HFLA) and 772–838 (VEVD…HLDR). Residues 867-871 (LNWLL) carry the LXXLL motif 1 motif. One can recognise a Helicase ATP-binding domain in the interval 871 to 1045 (LFNWYNRRNC…FSLLHFLEPL (175 aa)). 884 to 891 (DEMGLGKT) provides a ligand contact to ATP. A DEAH box motif is present at residues 996 to 999 (DEAH). Positions 1035 to 1039 (LFSLL) match the LXXLL motif 2 motif. The 152-residue stretch at 1185-1336 (LIDKLLPKMK…KAVLQSMSGR (152 aa)) folds into the Helicase C-terminal domain. A disordered region spans residues 1460-1484 (KDELAELSEAESEGEEKPKLRRPCD). Positions 1464–1473 (AELSEAESEG) are enriched in acidic residues. S1467 and S1471 each carry phosphoserine. Over residues 1474-1484 (EEKPKLRRPCD) the composition is skewed to basic and acidic residues. Glycyl lysine isopeptide (Lys-Gly) (interchain with G-Cter in SUMO2) cross-links involve residues K1587, K1737, and K1902. Residue S2025 is modified to Phosphoserine. Residues 2030–2034 (LPRLL) carry the LXXLL motif 3 motif. K2037 participates in a covalent cross-link: Glycyl lysine isopeptide (Lys-Gly) (interchain with G-Cter in SUMO2). Positions 2046–2238 (VKSESLTEEP…TQDSFQANNG (193 aa)) are disordered. S2057 and S2058 each carry phosphoserine. K2073 is covalently cross-linked (Glycyl lysine isopeptide (Lys-Gly) (interchain with G-Cter in SUMO2)). Residues S2074 and S2078 each carry the phosphoserine modification. Positions 2083–2092 (VLSQATGDQK) are enriched in polar residues. Residues 2093–2103 (SGGKSETDRRM) are compositionally biased toward basic and acidic residues. The segment covering 2127–2193 (SQSSSDSDSD…SSSSSSSSSS (67 aa)) has biased composition (low complexity). Positions 2201–2215 (DVQKREGTPHRKAYD) are enriched in basic and acidic residues. Positions 2220 to 2238 (ASLSTTQDETQDSFQANNG) are enriched in polar residues. The interval 2331–2471 (QMSKVKKHVR…LSYPQPQRIP (141 aa)) is binds A/T-rich DNA. Residues K2349, K2355, and K2360 each participate in a glycyl lysine isopeptide (Lys-Gly) (interchain with G-Cter in SUMO2) cross-link. An a.T hook-like region spans residues 2428–2435 (KKRRGRRR). The segment at 2473–2494 (TESPVPVINLKDGTRLAGDDAP) is disordered. Basic and acidic residues predominate over residues 2484 to 2494 (DGTRLAGDDAP). The LXXLL motif 4 signature appears at 2710–2714 (LPNLL). The segment at 2724 to 2770 (AESGAEEKRGNDSKELEGKKERTESQSPENGGERCVPGSPSTSSTAA) is disordered. Residues 2728–2747 (AEEKRGNDSKELEGKKERTE) show a composition bias toward basic and acidic residues. Residues 2782 to 2786 (LNPLL) carry the LXXLL motif 5 motif. The segment covering 2818–2847 (KNKSDDLDSSKSVEIKEENSRVRDQEEKGG) has biased composition (basic and acidic residues). A disordered region spans residues 2818 to 2885 (KNKSDDLDSS…SEDSDSSNED (68 aa)). K2833 participates in a covalent cross-link: Glycyl lysine isopeptide (Lys-Gly) (interchain with G-Cter in SUMO2). Positions 2864-2876 (RASSGSDSSSSSS) are enriched in low complexity.

The protein belongs to the SNF2/RAD54 helicase family. Interacts with PPARA. Probably interacts with ESR1 and NR1I3. Post-translationally, phosphorylated on serine and tyrosine residues. Expressed in osteoprogenitor cells during development and in mature bone (at protein level).

The protein resides in the cytoplasm. It is found in the nucleus. The catalysed reaction is ATP + H2O = ADP + phosphate + H(+). Its function is as follows. Probable ATP-dependent chromatin-remodeling factor. Acts as a transcriptional coactivator for PPARA and possibly other nuclear receptors. Has DNA-dependent ATPase activity and binds to A/T-rich DNA. Associates with A/T-rich regulatory regions in promoters of genes that participate in the differentiation of progenitors during osteogenesis. This chain is Chromodomain-helicase-DNA-binding protein 9 (Chd9), found in Mus musculus (Mouse).